The primary structure comprises 910 residues: E3 ubiquitin-protein ligase HUL5 (910 aa).

Met-1 is subject to N-acetylmethionine. The tract at residues 1–25 (MLNFTGQTRRRNVNLGNRTRNSKKD) is disordered. The HECT domain occupies 810–910 (YGGYKEEDQT…INSGARFDLS (101 aa)). The active-site Glycyl thioester intermediate is the Cys-878.

Belongs to the UBE3C family. Interacts with 19S proteasomes.

It localises to the cytoplasm. The protein localises to the cytosol. The protein resides in the nucleus. It catalyses the reaction S-ubiquitinyl-[E2 ubiquitin-conjugating enzyme]-L-cysteine + [acceptor protein]-L-lysine = [E2 ubiquitin-conjugating enzyme]-L-cysteine + N(6)-ubiquitinyl-[acceptor protein]-L-lysine.. The protein operates within protein modification; protein ubiquitination. Its function is as follows. Non-essential E3 ubiquitin-protein ligase that specifically catalyzes 'Lys-29'- and 'Lys-48'-linked polyubiquitin chains. Accepts ubiquitin from an E2 ubiquitin-conjugating enzyme in the form of a thioester and then directly transfers the ubiquitin to targeted substrates. Associates with the proteasome and promotes elongation of ubiquitin chains on substrates bound to the proteasome. Elongation of ubiquitin chains on substrates bound to the proteasome promotes proteasomal processivity. Also promotes ubiquitin elongation of 26S proteasome subunit RPN10. Involved in the stress response required to maintain cell fitness following heat-shock: acts by mediating ubiquitination of cytosolic misfolded proteins, leading to their subsequent degradation. This Saccharomyces cerevisiae (strain ATCC 204508 / S288c) (Baker's yeast) protein is E3 ubiquitin-protein ligase HUL5.